The following is a 759-amino-acid chain: Phosphoribosylformylglycinamidine synthase subunit PurL (759 aa).

Histidine 61 is a catalytic residue. Positions 64 and 105 each coordinate ATP. Glutamate 107 contacts Mg(2+). Substrate is bound by residues 108–111 (SHNH) and arginine 130. Histidine 109 (proton acceptor) is an active-site residue. Position 131 (aspartate 131) interacts with Mg(2+). Glutamine 260 serves as a coordination point for substrate. Residue aspartate 288 participates in Mg(2+) binding. Residue 332-334 (ESQ) coordinates substrate. Residues aspartate 520 and glycine 557 each contribute to the ATP site. Residue asparagine 558 coordinates Mg(2+). Residue serine 560 participates in substrate binding.

Belongs to the FGAMS family. Monomer. Part of the FGAM synthase complex composed of 1 PurL, 1 PurQ and 2 PurS subunits.

The protein localises to the cytoplasm. The enzyme catalyses N(2)-formyl-N(1)-(5-phospho-beta-D-ribosyl)glycinamide + L-glutamine + ATP + H2O = 2-formamido-N(1)-(5-O-phospho-beta-D-ribosyl)acetamidine + L-glutamate + ADP + phosphate + H(+). Its pathway is purine metabolism; IMP biosynthesis via de novo pathway; 5-amino-1-(5-phospho-D-ribosyl)imidazole from N(2)-formyl-N(1)-(5-phospho-D-ribosyl)glycinamide: step 1/2. Its function is as follows. Part of the phosphoribosylformylglycinamidine synthase complex involved in the purines biosynthetic pathway. Catalyzes the ATP-dependent conversion of formylglycinamide ribonucleotide (FGAR) and glutamine to yield formylglycinamidine ribonucleotide (FGAM) and glutamate. The FGAM synthase complex is composed of three subunits. PurQ produces an ammonia molecule by converting glutamine to glutamate. PurL transfers the ammonia molecule to FGAR to form FGAM in an ATP-dependent manner. PurS interacts with PurQ and PurL and is thought to assist in the transfer of the ammonia molecule from PurQ to PurL. This is Phosphoribosylformylglycinamidine synthase subunit PurL from Thermoplasma volcanium (strain ATCC 51530 / DSM 4299 / JCM 9571 / NBRC 15438 / GSS1).